We begin with the raw amino-acid sequence, 79 residues long: MRKEVQEYILANEERKRFIREQPIWYRRLSRKPDDLSSFQLEMMNFYEKTIPHRVNQFTNGIQMAQMMMQMFQAMRTKD.

This is an uncharacterized protein from Bacillus subtilis (strain 168).